We begin with the raw amino-acid sequence, 288 residues long: Putative alkaline ceramidase dcd3A (288 aa).

Asparagine 23 is a glycosylation site (N-linked (GlcNAc...) asparagine). 7 helical membrane passes run 41 to 61 (IISL…GTGV), 78 to 98 (VILS…YHAT), 105 to 125 (LFDE…MVTV), 146 to 166 (HLLP…ILVI), 172 to 192 (ILQV…IYLI), 206 to 226 (SYLY…WVVE), and 240 to 260 (LHAF…QFLI).

This sequence belongs to the alkaline ceramidase family.

Its subcellular location is the membrane. In Dictyostelium discoideum (Social amoeba), this protein is Putative alkaline ceramidase dcd3A (dcd3A).